Reading from the N-terminus, the 314-residue chain is Nodulation protein D 1 (314 aa).

The 58-residue stretch at 6 to 63 (LDLNLLVVLDALLTERTLTAAASSINLSQPAMSAAVARLRDYFNDELFTTSGRERVLT) folds into the HTH lysR-type domain. Residues 23–42 (LTAAASSINLSQPAMSAAVA) constitute a DNA-binding region (H-T-H motif).

The protein belongs to the LysR transcriptional regulatory family.

NodD regulates the expression of the nodABCFE genes which encode other nodulation proteins. NodD is also a negative regulator of its own expression. Binds flavenoids as inducers. The polypeptide is Nodulation protein D 1 (nodD1) (Mesorhizobium japonicum (strain LMG 29417 / CECT 9101 / MAFF 303099) (Mesorhizobium loti (strain MAFF 303099))).